Reading from the N-terminus, the 185-residue chain is Ribosome-recycling factor (185 aa).

Belongs to the RRF family.

It localises to the cytoplasm. In terms of biological role, responsible for the release of ribosomes from messenger RNA at the termination of protein biosynthesis. May increase the efficiency of translation by recycling ribosomes from one round of translation to another. This Roseiflexus sp. (strain RS-1) protein is Ribosome-recycling factor.